A 112-amino-acid polypeptide reads, in one-letter code: uncharacterized protein (112 aa).

The segment at 1 to 27 is disordered; it reads MIASIGDSAEPPLRRTRRAQQQDRPPT.

This is an uncharacterized protein from Orgyia pseudotsugata multicapsid polyhedrosis virus (OpMNPV).